We begin with the raw amino-acid sequence, 742 residues long: Phosphoribosylformylglycinamidine synthase subunit PurL (742 aa).

Residue His-53 is part of the active site. Residues Tyr-56 and Lys-95 each coordinate ATP. Glu-97 is a binding site for Mg(2+). Substrate-binding positions include 98–101 and Arg-120; that span reads SHNH. His-99 serves as the catalytic Proton acceptor. Mg(2+) is bound at residue Asp-121. A substrate-binding site is contributed by Gln-245. Residue Asp-275 coordinates Mg(2+). A substrate-binding site is contributed by 319–321; the sequence is ESQ. 2 residues coordinate ATP: Asp-502 and Gly-539. Position 540 (Asn-540) interacts with Mg(2+). Ser-542 is a binding site for substrate.

This sequence belongs to the FGAMS family. As to quaternary structure, monomer. Part of the FGAM synthase complex composed of 1 PurL, 1 PurQ and 2 PurS subunits.

The protein resides in the cytoplasm. The catalysed reaction is N(2)-formyl-N(1)-(5-phospho-beta-D-ribosyl)glycinamide + L-glutamine + ATP + H2O = 2-formamido-N(1)-(5-O-phospho-beta-D-ribosyl)acetamidine + L-glutamate + ADP + phosphate + H(+). Its pathway is purine metabolism; IMP biosynthesis via de novo pathway; 5-amino-1-(5-phospho-D-ribosyl)imidazole from N(2)-formyl-N(1)-(5-phospho-D-ribosyl)glycinamide: step 1/2. In terms of biological role, part of the phosphoribosylformylglycinamidine synthase complex involved in the purines biosynthetic pathway. Catalyzes the ATP-dependent conversion of formylglycinamide ribonucleotide (FGAR) and glutamine to yield formylglycinamidine ribonucleotide (FGAM) and glutamate. The FGAM synthase complex is composed of three subunits. PurQ produces an ammonia molecule by converting glutamine to glutamate. PurL transfers the ammonia molecule to FGAR to form FGAM in an ATP-dependent manner. PurS interacts with PurQ and PurL and is thought to assist in the transfer of the ammonia molecule from PurQ to PurL. This is Phosphoribosylformylglycinamidine synthase subunit PurL from Lactobacillus acidophilus (strain ATCC 700396 / NCK56 / N2 / NCFM).